The chain runs to 525 residues: Ribosomal protein uS12 methylthiotransferase RimO (525 aa).

Residues 1-20 (MPKISTESVNTTIAPSQPAS) show a composition bias toward polar residues. The segment at 1–44 (MPKISTESVNTTIAPSQPASTAPKDTATLFNPAKPTATPAQSSI) is disordered. Positions 82-192 (PKIGFVSLGC…VIRAVALHVP (111 aa)) constitute an MTTase N-terminal domain. [4Fe-4S] cluster-binding residues include C91, C127, C156, C230, C234, and C237. One can recognise a Radical SAM core domain in the interval 216-453 (LTPSHYAYLK…MTLQQDISAQ (238 aa)). Residues 456–525 (QEKIGKTLMV…EYDLFASYQA (70 aa)) enclose the TRAM domain.

It belongs to the methylthiotransferase family. RimO subfamily. Requires [4Fe-4S] cluster as cofactor.

Its subcellular location is the cytoplasm. The enzyme catalyses L-aspartate(89)-[ribosomal protein uS12]-hydrogen + (sulfur carrier)-SH + AH2 + 2 S-adenosyl-L-methionine = 3-methylsulfanyl-L-aspartate(89)-[ribosomal protein uS12]-hydrogen + (sulfur carrier)-H + 5'-deoxyadenosine + L-methionine + A + S-adenosyl-L-homocysteine + 2 H(+). Functionally, catalyzes the methylthiolation of an aspartic acid residue of ribosomal protein uS12. This Psychrobacter arcticus (strain DSM 17307 / VKM B-2377 / 273-4) protein is Ribosomal protein uS12 methylthiotransferase RimO.